We begin with the raw amino-acid sequence, 286 residues long: Pollen allergen Phl p 5a (286 aa).

Residues 1 to 34 (ADLGYGPATPAAPAAGYTPATPAAPAGADAAGKA) show a composition bias toward low complexity. Residues 1–35 (ADLGYGPATPAAPAAGYTPATPAAPAGADAAGKAT) form a disordered region.

This sequence belongs to the Poa p IX/Phl p VI allergen family.

Its subcellular location is the secreted. The sequence is that of Pollen allergen Phl p 5a from Phleum pratense (Common timothy).